We begin with the raw amino-acid sequence, 306 residues long: Protoheme IX farnesyltransferase (306 aa).

The next 9 helical transmembrane spans lie at 28–48, 53–73, 105–125, 127–147, 156–176, 182–202, 227–244, 246–266, and 283–303; these read LGLVQGNLIPAFAGAFIAIML, FLSSIPELLTMLFGTTLIMAG, ASILQLSLVLMIVGEMLLFTI, IETGIIGFLGIFGYVVLYSVW, TIIGSFPGAIPPLVGYAAIEP, AWMLFVIMFIWQPAHFYALAI, LSMLFWVMLLLPTPFFMQ, LGTVFMVLASVLNLGWLLLAI, and FVYSLNYLMIFFVMIVVVTLI.

Belongs to the UbiA prenyltransferase family. Protoheme IX farnesyltransferase subfamily. In terms of assembly, interacts with CtaA.

It localises to the cell membrane. The enzyme catalyses heme b + (2E,6E)-farnesyl diphosphate + H2O = Fe(II)-heme o + diphosphate. The protein operates within porphyrin-containing compound metabolism; heme O biosynthesis; heme O from protoheme: step 1/1. In terms of biological role, converts heme B (protoheme IX) to heme O by substitution of the vinyl group on carbon 2 of heme B porphyrin ring with a hydroxyethyl farnesyl side group. The polypeptide is Protoheme IX farnesyltransferase (Macrococcus caseolyticus (strain JCSC5402) (Macrococcoides caseolyticum)).